The primary structure comprises 429 residues: MTIITDVYAREVLDSRGNPTVEVEVYLESGAMGRALVPSGASTGEYEAVELRDGGERFLGKGVLKAVENVNEVIAPELIGFDALDQIGIDQHMIELDGTENKGKLGANAILGVSMAVARAAANALDLPLYVYLGGFNAKQLPVPMMNIINGGEHADNNVDIQEFMIMPVGAESFKEALRTGTEIFHSLKKVLKSKGYNTAVGDEGGFAPNLSSNEEALQTIIEAIEQAGYTPGEQVKLAMDVASSELYNKEDGKYHLSGEGKVLSSEEMVAFYEELVAKYPIISIEDGLDENDWEGHKMLTDRLGDKVQLVGDDLFVTNTKKLAQGIEQGVGNSILIKVNQIGTLTETFDAIEMAKRAGYTAVISHRSGETEDSTIADIAVATNAGQIKTGAPSRTDRVAKYNQLLRIEDELGNLAQYNGLQSFYNLKK.

Q162 is a binding site for (2R)-2-phosphoglycerate. Catalysis depends on E204, which acts as the Proton donor. D241, E286, and D313 together coordinate Mg(2+). (2R)-2-phosphoglycerate-binding residues include K338, R367, S368, and K389. The active-site Proton acceptor is the K338.

This sequence belongs to the enolase family. Mg(2+) is required as a cofactor.

The protein localises to the cytoplasm. Its subcellular location is the secreted. It is found in the cell surface. The enzyme catalyses (2R)-2-phosphoglycerate = phosphoenolpyruvate + H2O. The protein operates within carbohydrate degradation; glycolysis; pyruvate from D-glyceraldehyde 3-phosphate: step 4/5. Functionally, catalyzes the reversible conversion of 2-phosphoglycerate (2-PG) into phosphoenolpyruvate (PEP). It is essential for the degradation of carbohydrates via glycolysis. The chain is Enolase from Halalkalibacterium halodurans (strain ATCC BAA-125 / DSM 18197 / FERM 7344 / JCM 9153 / C-125) (Bacillus halodurans).